A 272-amino-acid chain; its full sequence is Undecaprenyl-diphosphatase (272 aa).

A run of 8 helical transmembrane segments spans residues 4–24 (FEVIKALFLGFVEGLTEFLPI), 43–63 (GGRVFEVVIQLGAILAVCWLY), 86–106 (ISVLIAFFPAVIIGVLAVDFI), 109–129 (VLFSPIVVAIALIVGALIIFW), 145–165 (ITFKQALLVGLAQCVAMIPGT), 186–206 (TEFSFFLAMPTMLGAATFDLI), 222–242 (VGFVAAFIAALLVVKALVLFV), and 249–269 (VFAWYRIVLGVIILIAAMFFN).

The protein belongs to the UppP family.

It localises to the cell inner membrane. It carries out the reaction di-trans,octa-cis-undecaprenyl diphosphate + H2O = di-trans,octa-cis-undecaprenyl phosphate + phosphate + H(+). In terms of biological role, catalyzes the dephosphorylation of undecaprenyl diphosphate (UPP). Confers resistance to bacitracin. The sequence is that of Undecaprenyl-diphosphatase from Acinetobacter baumannii (strain SDF).